Here is a 132-residue protein sequence, read N- to C-terminus: Putative apolipoprotein(a)-like protein 2 (132 aa).

Residues 1–21 (MEHKEVVLLLLLFLKSAPTET) form the signal peptide. In terms of domain architecture, Kringle spans 27–105 (ECYHSNGQSY…RWEYCNLTRC (79 aa)). 3 cysteine pairs are disulfide-bonded: C28/C105, C49/C88, and C77/C100. N-linked (GlcNAc...) asparagine glycosylation occurs at N101.

Expressed in liver but not in other tissues tested.

Its subcellular location is the secreted. In Homo sapiens (Human), this protein is Putative apolipoprotein(a)-like protein 2 (LPAL2).